A 441-amino-acid chain; its full sequence is tRNA-2-methylthio-N(6)-dimethylallyladenosine synthase (441 aa).

The MTTase N-terminal domain maps to 5 to 121 (KKLYLETFGC…LQGMVAAAEE (117 aa)). Positions 14, 50, 84, 159, 163, and 166 each coordinate [4Fe-4S] cluster. Residues 145-375 (AEGGVTRFVT…QAAQKKTTLA (231 aa)) enclose the Radical SAM core domain. Positions 378-440 (RSLEGTVQKV…QTLLKGEIVH (63 aa)) constitute a TRAM domain.

This sequence belongs to the methylthiotransferase family. MiaB subfamily. Monomer. It depends on [4Fe-4S] cluster as a cofactor.

It localises to the cytoplasm. The enzyme catalyses N(6)-dimethylallyladenosine(37) in tRNA + (sulfur carrier)-SH + AH2 + 2 S-adenosyl-L-methionine = 2-methylsulfanyl-N(6)-dimethylallyladenosine(37) in tRNA + (sulfur carrier)-H + 5'-deoxyadenosine + L-methionine + A + S-adenosyl-L-homocysteine + 2 H(+). Functionally, catalyzes the methylthiolation of N6-(dimethylallyl)adenosine (i(6)A), leading to the formation of 2-methylthio-N6-(dimethylallyl)adenosine (ms(2)i(6)A) at position 37 in tRNAs that read codons beginning with uridine. The chain is tRNA-2-methylthio-N(6)-dimethylallyladenosine synthase from Citrifermentans bemidjiense (strain ATCC BAA-1014 / DSM 16622 / JCM 12645 / Bem) (Geobacter bemidjiensis).